Consider the following 526-residue polypeptide: Cytochrome P450 monooxygenase COX2 (526 aa).

An N-linked (GlcNAc...) asparagine glycan is attached at Asn-11. Residues 12–31 (ITTNHVAAAVCAGIAVYAIV) traverse the membrane as a helical segment. Residue Asn-302 is glycosylated (N-linked (GlcNAc...) asparagine). Position 450 (Cys-450) interacts with heme.

It belongs to the cytochrome P450 family. It depends on heme as a cofactor.

The protein localises to the membrane. The protein operates within secondary metabolite biosynthesis. Functionally, cytochrome P450 monooxygenase; part of the gene cluster that mediates the biosynthesis of alpha-cuprenene and oxidized derivatives. The alpha-cuprenene synthase COP6 is the only sesquiterpene synthase identified in C.cinereus that appears to be part of a biosynthetic gene cluster and is highly specific since it catalyzes the cyclization of (2E,6E)-farnesyl diphosphate into only one product, alpha-cuprenene. The cytochrome P450 monooxygenase COX2 then oxidizes the cyclohexadiene ring of alpha-cuprenene at positions 1 and 4, yielding first alpha-cuparene, followed by alpha-cuparophenol and a further yet unidentified compound resulting from one additional oxidation step. The cytochrome P450 monooxygenase COX1 then likely catalyzes the oxidation at position 9 of the pentane ring of alpha-cuprenene to give the corresponding hydroxy or ketone derivatives. The chain is Cytochrome P450 monooxygenase COX2 from Coprinopsis cinerea (strain Okayama-7 / 130 / ATCC MYA-4618 / FGSC 9003) (Inky cap fungus).